Consider the following 375-residue polypeptide: Phospho-N-acetylmuramoyl-pentapeptide-transferase (375 aa).

10 helical membrane-spanning segments follow: residues 2 to 22, 55 to 75, 82 to 102, 120 to 140, 158 to 178, 198 to 218, 237 to 257, 264 to 284, 289 to 309, and 345 to 365; these read IGLL…TPLF, AVII…LAVL, PTAS…VGFV, GKII…LNFP, IPWL…FVIW, GLAT…SLFQ, PMDL…FLWW, IFMG…FAIF, ILVA…IIQV, and WLLS…DWLI.

It belongs to the glycosyltransferase 4 family. MraY subfamily. Mg(2+) is required as a cofactor.

It is found in the cell membrane. It catalyses the reaction UDP-N-acetyl-alpha-D-muramoyl-L-alanyl-gamma-D-glutamyl-meso-2,6-diaminopimeloyl-D-alanyl-D-alanine + di-trans,octa-cis-undecaprenyl phosphate = di-trans,octa-cis-undecaprenyl diphospho-N-acetyl-alpha-D-muramoyl-L-alanyl-D-glutamyl-meso-2,6-diaminopimeloyl-D-alanyl-D-alanine + UMP. It functions in the pathway cell wall biogenesis; peptidoglycan biosynthesis. Its function is as follows. Catalyzes the initial step of the lipid cycle reactions in the biosynthesis of the cell wall peptidoglycan: transfers peptidoglycan precursor phospho-MurNAc-pentapeptide from UDP-MurNAc-pentapeptide onto the lipid carrier undecaprenyl phosphate, yielding undecaprenyl-pyrophosphoryl-MurNAc-pentapeptide, known as lipid I. This is Phospho-N-acetylmuramoyl-pentapeptide-transferase from Micrococcus luteus (strain ATCC 4698 / DSM 20030 / JCM 1464 / CCM 169 / CCUG 5858 / IAM 1056 / NBRC 3333 / NCIMB 9278 / NCTC 2665 / VKM Ac-2230) (Micrococcus lysodeikticus).